Here is a 476-residue protein sequence, read N- to C-terminus: Bifunctional protein HldE (476 aa).

The interval 1–318 is ribokinase; it reads MKPILPDYNN…AEAIHGSRDT (318 aa). An ATP-binding site is contributed by 195 to 198; it reads NMSE. The active site involves aspartate 264. A cytidylyltransferase region spans residues 344–476; it reads MTNGCFDILH…IIDAIKGGRG (133 aa).

This sequence in the N-terminal section; belongs to the carbohydrate kinase PfkB family. The protein in the C-terminal section; belongs to the cytidylyltransferase family. In terms of assembly, homodimer.

It carries out the reaction D-glycero-beta-D-manno-heptose 7-phosphate + ATP = D-glycero-beta-D-manno-heptose 1,7-bisphosphate + ADP + H(+). The enzyme catalyses D-glycero-beta-D-manno-heptose 1-phosphate + ATP + H(+) = ADP-D-glycero-beta-D-manno-heptose + diphosphate. It participates in nucleotide-sugar biosynthesis; ADP-L-glycero-beta-D-manno-heptose biosynthesis; ADP-L-glycero-beta-D-manno-heptose from D-glycero-beta-D-manno-heptose 7-phosphate: step 1/4. It functions in the pathway nucleotide-sugar biosynthesis; ADP-L-glycero-beta-D-manno-heptose biosynthesis; ADP-L-glycero-beta-D-manno-heptose from D-glycero-beta-D-manno-heptose 7-phosphate: step 3/4. Its pathway is bacterial outer membrane biogenesis; LPS core biosynthesis. Its function is as follows. Catalyzes the phosphorylation of D-glycero-D-manno-heptose 7-phosphate at the C-1 position to selectively form D-glycero-beta-D-manno-heptose-1,7-bisphosphate. Functionally, catalyzes the ADP transfer from ATP to D-glycero-beta-D-manno-heptose 1-phosphate, yielding ADP-D-glycero-beta-D-manno-heptose. The chain is Bifunctional protein HldE from Vibrio vulnificus (strain CMCP6).